A 214-amino-acid chain; its full sequence is GTP-binding nuclear protein GSP1 (214 aa).

Residues 4–172 (RELTYKICLI…LHLARIFTGR (169 aa)) form the Small GTPase Ran-type domain. Residue 17–22 (GVGKTT) participates in GTP binding. Positions 34 to 42 (KNYNATVGA) are switch-I. Residues G66, 121-124 (NKID), and 151-153 (SAK) each bind GTP. The switch-II stretch occupies residues 66 to 82 (GQEKKAVLKDVYYIGAS).

Belongs to the small GTPase superfamily. Ran family. Found in a nuclear export complex with RanGTP, exportin and pre-miRNA.

The protein resides in the nucleus. Functionally, GTP-binding protein involved in nucleocytoplasmic transport. Required for the import of protein into the nucleus and also for RNA export. The chain is GTP-binding nuclear protein GSP1 (GSP1) from Encephalitozoon cuniculi (strain GB-M1) (Microsporidian parasite).